Here is a 343-residue protein sequence, read N- to C-terminus: Protease inhibitor Egf1.5a (343 aa).

A signal peptide spans methionine 1–alanine 28. Residues cysteine 52–cysteine 104 enclose the TIL domain.

Belongs to the polydnaviridae EGF-like motif protein family. In terms of assembly, interacts with host PAP1, PAP3 and SPH2.

Counteracts the host humoral immune response by inhibiting the processing and the amidolytic activity of host PAP1 and PAP3. Thereby, melanization of host hemolymph, normally producing several reactive intermediates toxic for viruses, is deregulated and proper immune response cannot occur. In Microplitis demolitor bracovirus (isolate Webb) (MdBV), this protein is Protease inhibitor Egf1.5a (O1).